We begin with the raw amino-acid sequence, 298 residues long: MSDIEEVVEEYEEEEQEEAAVEEEEDWREDEDEQEEAAEEDAEAEAETEETRAEEDEEEEEAKEAEDGPMEESKPKPRSFMPNLVPPKIPDGERVDFDDIHRKRMEKDLNELQALIEAHFENRKKEEEELVSLKDRIERRRAERAEQQRIRNEREKERQNRLAEERARREEEENRRKAEDEARKKKALSNMMHFGGYIQKQAQTERKSGKRQTEREKKKKILAERRKVLAIDHLNEDQLREKAKELWQSIYNLEAEKFDLQEKFKQQKYEINVLRNRINDNQKVSKTRGKAKVTGRWK.

The span at 1-70 (MSDIEEVVEE…EAKEAEDGPM (70 aa)) shows a compositional bias: acidic residues. Disordered regions lie at residues 1–95 (MSDI…GERV) and 120–219 (FENR…EKKK). An N-acetylserine modification is found at serine 2. Position 2 is a phosphoserine; by CK2 (serine 2). Basic and acidic residues-rich tracts occupy residues 120-183 (FENR…DEAR) and 203-219 (QTERKSGKRQTEREKKK). Residue threonine 204 is modified to Phosphothreonine; by PKC/PRKCA. At serine 208 the chain carries Phosphoserine; by PKC/PRKCA. Threonine 213 bears the Phosphothreonine; by PKC/PRKCA and RAF1 mark. The residue at position 294 (threonine 294) is a Phosphothreonine; by PKC/PRKCA.

It belongs to the troponin T family. In terms of processing, phosphorylation at Thr-213 by PRKCA induces significant reduction in myofilament calcium sensitivity and actomyosin ATPase activity. In terms of tissue distribution, heart. The fetal heart shows a greater expression in the atrium than in the ventricle, while the adult heart shows a greater expression in the ventricle than in the atrium. Isoform 6 predominates in normal adult heart. Isoforms 1, 7 and 8 are expressed in fetal heart. Isoform 7 is also expressed in failing adult heart.

Its function is as follows. Troponin T is the tropomyosin-binding subunit of troponin, the thin filament regulatory complex which confers calcium-sensitivity to striated muscle actomyosin ATPase activity. In Homo sapiens (Human), this protein is Troponin T, cardiac muscle (TNNT2).